The chain runs to 611 residues: Cilia- and flagella-associated protein 100 (611 aa).

A compositionally biased stretch (polar residues) spans 1–17 (MSEIPSTIVSKNMTNDK). Residues 1-57 (MSEIPSTIVSKNMTNDKNSLESMNISSSSSTEENPKKQARKNEEHGPDPSANPFHLS) form a disordered region. The segment covering 20 to 32 (LESMNISSSSSTE) has biased composition (low complexity). The segment covering 33-47 (ENPKKQARKNEEHGP) has biased composition (basic and acidic residues). Coiled-coil stretches lie at residues 101-128 (SLRR…RAFR), 164-203 (ALDV…FDEF), and 230-257 (LEIR…KHYK). 2 disordered regions span residues 287–323 (EVSE…GQGT) and 338–380 (SPSY…GEEP). A compositionally biased stretch (low complexity) spans 338–357 (SPSYLSSPQQGSQPSESSGG). Coiled coils occupy residues 393 to 432 (VFRE…MDRE) and 526 to 578 (QVKI…RGRT).

It belongs to the CFAP100 family.

The protein localises to the cytoplasm. Its subcellular location is the cytoskeleton. The protein resides in the cilium axoneme. In terms of biological role, may play a role in ciliary/flagellar motility by regulating the assembly and the activity of axonemal inner dynein arm. This is Cilia- and flagella-associated protein 100 from Homo sapiens (Human).